The chain runs to 206 residues: Inner membrane protein YnjF (206 aa).

Over Met-1–Ala-37 the chain is Periplasmic. Residues Ile-38–Leu-60 traverse the membrane as a helical segment. The Cytoplasmic segment spans residues Asn-61–Asp-79. The chain crosses the membrane as a helical span at residues Ala-80–Leu-102. The Periplasmic portion of the chain corresponds to Ala-103 to Ala-111. The helical transmembrane segment at Gly-112–Ala-134 threads the bilayer. The Cytoplasmic segment spans residues Lys-135–Lys-146. Residues Ser-147 to Leu-169 form a helical membrane-spanning segment. Topologically, residues Phe-170–Trp-173 are periplasmic. Residues Phe-174 to Gly-196 traverse the membrane as a helical segment. Residues Tyr-197–Gln-206 are Cytoplasmic-facing.

It belongs to the CDP-alcohol phosphatidyltransferase class-I family.

It is found in the cell inner membrane. In Escherichia coli (strain K12), this protein is Inner membrane protein YnjF (ynjF).